Here is a 216-residue protein sequence, read N- to C-terminus: Probable transaldolase (216 aa).

The Schiff-base intermediate with substrate role is filled by lysine 83.

The protein belongs to the transaldolase family. Type 3B subfamily.

Its subcellular location is the cytoplasm. The enzyme catalyses D-sedoheptulose 7-phosphate + D-glyceraldehyde 3-phosphate = D-erythrose 4-phosphate + beta-D-fructose 6-phosphate. It functions in the pathway carbohydrate degradation; pentose phosphate pathway; D-glyceraldehyde 3-phosphate and beta-D-fructose 6-phosphate from D-ribose 5-phosphate and D-xylulose 5-phosphate (non-oxidative stage): step 2/3. Functionally, transaldolase is important for the balance of metabolites in the pentose-phosphate pathway. The chain is Probable transaldolase from Shouchella clausii (strain KSM-K16) (Alkalihalobacillus clausii).